The following is a 183-amino-acid chain: MQMDWLFIAVVSAIGLLSSGVPGTQGAYTTEQCRALNGTCRFYACFPKNVVIGKCDWLGWGCCARTPLERCTAKKGTCTASGCTETDTDHGPCDGGAQCCQRDPVKYCKFHGNVCGRGKCPMDHIPIGEQCMPGYPCCKRDGPAYCKSKGGKCLRRCSQIVPTDIIGVCADGVPCCKSRQSTG.

The N-terminal stretch at 1–26 (MQMDWLFIAVVSAIGLLSSGVPGTQG) is a signal peptide. The stretch at 27–64 (AYTTEQCRALNGTCRFYACFPKNVVIGKCDWLGWGCCA) is one C(6)C(4)C(9)C(6)CC 1; approximate repeat. A C(6)C(4)C(9)C(6)CC 2; approximate repeat occupies 65 to 101 (RTPLERCTAKKGTCTASGCTETDTDHGPCDGGAQCCQ). One copy of the C(6)C(4)C(9)C(6)CC 3; approximate repeat lies at 102 to 139 (RDPVKYCKFHGNVCGRGKCPMDHIPIGEQCMPGYPCCK). A C(6)C(4)C(9)C(6)CC 4; approximate repeat occupies 140–177 (RDGPAYCKSKGGKCLRRCSQIVPTDIIGVCADGVPCCK).

The protein belongs to the beta-defensin family. Helofensin subfamily. As to expression, expressed by the mandibular venom gland.

The protein localises to the secreted. Lethal toxin which possesses an inhibitory effect on direct electrical stimulation of the isolated hemi-diaphragm of mice. Neither hemorrhagic nor hemolytic activities are detected. Phospholipase A2 activity, proteolytic activity and arginine esterolytic activity are absent. The sequence is that of Helofensin-1 from Heloderma suspectum cinctum (Banded Gila monster).